The following is a 205-amino-acid chain: uncharacterized protein (205 aa).

One can recognise a GST N-terminal domain in the interval 1–82 (MIKVYGVPGW…MVLDRRPDLA (82 aa)). Glutathione is bound by residues Val-53 and 66–67 (ET). Positions 86-205 (GRAERQLFQR…QEVLKRNEII (120 aa)) constitute a GST C-terminal domain.

The protein belongs to the GST superfamily. Beta family.

This is an uncharacterized protein from Escherichia coli (strain K12).